The sequence spans 209 residues: Protein lin-28 homolog A (209 aa).

Residues 1–31 (MGSVSNQQFAGGCAKAAEKAPEEAPPDAARA) form a disordered region. N-acetylglycine is present on glycine 2. Residue serine 3 is modified to Phosphoserine. Residues 39-112 (HGAGICKWFN…GLESIRVTGP (74 aa)) enclose the CSD domain. Residues 113–136 (GGVFCIGSERRPKGKNMQKRRSKG) form a flexible linker region. A Phosphoserine modification is found at serine 120. CCHC-type zinc fingers lie at residues 137–154 (DRCYNCGGLDHHAKECKL) and 159–176 (KKCHFCQSINHMVASCPL). Residues 177–209 (KAQQGPSSQGKPAYFREEEEEIHSPALLPEAQN) form a disordered region. Serine 200 bears the Phosphoserine mark.

Belongs to the lin-28 family. As to quaternary structure, monomer. During skeletal muscle differentiation, associated with translation initiation complexes in the polysomal compartment. Directly interacts with EIF3S2. Interacts with NCL in an RNA-dependent manner. Interacts with TUT4 in the presence of pre-let-7 RNA. Expressed in embryonic stem cells (ES cells), spermatagonia and testis. Expressed in numerous epithelial tissues including the epithelia of the small intestine, the intralobular duct epithelium of the mammary gland and the epithelia of Henle's loop in the kidney and in the collecting duct (at protein level). Also expressed in the myocardium and skeletal muscle (at protein level).

The protein localises to the cytoplasm. The protein resides in the rough endoplasmic reticulum. It localises to the P-body. Its subcellular location is the stress granule. It is found in the nucleus. The protein localises to the nucleolus. Its function is as follows. RNA-binding protein that inhibits processing of pre-let-7 miRNAs and regulates translation of mRNAs that control developmental timing, pluripotency and metabolism. Seems to recognize a common structural G-quartet (G4) feature in its miRNA and mRNA targets. 'Translational enhancer' that drives specific mRNAs to polysomes and increases the efficiency of protein synthesis. Its association with the translational machinery and target mRNAs results in an increased number of initiation events per molecule of mRNA and, indirectly, in mRNA stabilization. Binds IGF2 mRNA, MYOD1 mRNA, ARBP/36B4 ribosomal protein mRNA and its own mRNA. Essential for skeletal muscle differentiation program through the translational up-regulation of IGF2 expression. Suppressor of microRNA (miRNA) biogenesis, including that of let-7, miR107, miR-143 and miR-200c. Specifically binds the miRNA precursors (pre-miRNAs), recognizing an 5'-GGAG-3' motif found in pre-miRNA terminal loop, and recruits TUT4 and TUT7 uridylyltransferaseS. This results in the terminal uridylation of target pre-miRNAs. Uridylated pre-miRNAs fail to be processed by Dicer and undergo degradation. The repression of let-7 expression is required for normal development and contributes to maintain the pluripotent state by preventing let-7-mediated differentiation of embryonic stem cells. Localized to the periendoplasmic reticulum area, binds to a large number of spliced mRNAs and inhibits the translation of mRNAs destined for the ER, reducing the synthesis of transmembrane proteins, ER or Golgi lumen proteins, and secretory proteins. Binds to and enhances the translation of mRNAs for several metabolic enzymes, such as PFKP, PDHA1 or SDHA, increasing glycolysis and oxidative phosphorylation. Which, with the let-7 repression may enhance tissue repair in adult tissue. The protein is Protein lin-28 homolog A (Lin28a) of Mus musculus (Mouse).